The following is a 231-amino-acid chain: Large ribosomal subunit protein uL1 (231 aa).

The protein belongs to the universal ribosomal protein uL1 family. In terms of assembly, part of the 50S ribosomal subunit.

Its function is as follows. Binds directly to 23S rRNA. The L1 stalk is quite mobile in the ribosome, and is involved in E site tRNA release. Protein L1 is also a translational repressor protein, it controls the translation of the L11 operon by binding to its mRNA. In Acetivibrio thermocellus (strain ATCC 27405 / DSM 1237 / JCM 9322 / NBRC 103400 / NCIMB 10682 / NRRL B-4536 / VPI 7372) (Clostridium thermocellum), this protein is Large ribosomal subunit protein uL1.